Here is a 123-residue protein sequence, read N- to C-terminus: Ribosome-binding factor A (123 aa).

It belongs to the RbfA family. As to quaternary structure, monomer. Binds 30S ribosomal subunits, but not 50S ribosomal subunits or 70S ribosomes.

It is found in the cytoplasm. One of several proteins that assist in the late maturation steps of the functional core of the 30S ribosomal subunit. Associates with free 30S ribosomal subunits (but not with 30S subunits that are part of 70S ribosomes or polysomes). Required for efficient processing of 16S rRNA. May interact with the 5'-terminal helix region of 16S rRNA. In Trichlorobacter lovleyi (strain ATCC BAA-1151 / DSM 17278 / SZ) (Geobacter lovleyi), this protein is Ribosome-binding factor A.